A 77-amino-acid polypeptide reads, in one-letter code: Immune protein Tsi2 (77 aa).

As to quaternary structure, forms a heterotetramer with Tse2 consisting of two Tse2 dimers and two Tsi2 dimers. Formation of the complex inactivates Tse2 enzymatic activity.

Immunity protein that plays a role in preventing early activation of toxin Tse2. Binds to a large surface of Tse2 and thereby occludes the active site to specifically inhibits Tse2. The sequence is that of Immune protein Tsi2 from Pseudomonas aeruginosa (strain ATCC 15692 / DSM 22644 / CIP 104116 / JCM 14847 / LMG 12228 / 1C / PRS 101 / PAO1).